The sequence spans 338 residues: 4-hydroxy-2-oxovalerate aldolase (338 aa).

Residues 6-256 enclose the Pyruvate carboxyltransferase domain; it reads IHIVDTTLRD…RTGVDFYKVM (251 aa). Substrate is bound at residue 14–15; the sequence is RD. Asp15 lines the Mn(2+) pocket. His18 (proton acceptor) is an active-site residue. Ser168 and His195 together coordinate substrate. His195 and His197 together coordinate Mn(2+). Tyr286 is a binding site for substrate.

Belongs to the 4-hydroxy-2-oxovalerate aldolase family.

It carries out the reaction (S)-4-hydroxy-2-oxopentanoate = acetaldehyde + pyruvate. This chain is 4-hydroxy-2-oxovalerate aldolase, found in Moorella thermoacetica (strain ATCC 39073 / JCM 9320).